A 633-amino-acid chain; its full sequence is MINIYFNNNLCKQFHRGIKGYDVVADLFPELKNKAIAVKVNGESYDLSREITENCTFEVITTNSEEGLEIIRHDTAHIMAQAVKEIFPDTQITIGPTIKDGFYYDFATEHNFSSNDLEIIEKKMIEIINKNESFIREVWTREEAIKFFSSIGEDYKVKIISKIPNNENITVYKQGNFIDLCRGPHAPSTKTSKSFKLTKVSGSYWQGNSSNEKLQRIYGTAWRNEEELKSYLNNLIEIEKRDHRKIGKELELFHIQNEACGQVFWHKKGWTIYRTIENYIRKKLETNGYIEVKTPMLLNKELWEKSGHWDKFRENMFLSEAEDKVLAIKPMNCPCHIQIFNSKIRSYRDLPIRMAEFGICHRYEASGALHGLMRVRGFTQDDAHIFCTESQVISEALKFCNLLMEVYKDFGFTNILVKFSDRPENRAGSDETWDRAESALKKSVEAANLNYVLNPGDGAFYGPKLEFVLKDAIGREWQCGTLQMDFVLPERLGAYYVGSDGKKHHPIMLHRAILGTFERFIGILIEHHSGKFPIWLAPTQLSILTISEESIEYANSLKTKAEEHNIRVELDATNEKINYKIRNHIHKKIPVFWIVGKKEVNENSVSIRYLESNTQQVMPIDKALKTLLTCVSI.

A TGS domain is found at 1-61 (MINIYFNNNL…TENCTFEVIT (61 aa)). Residues 242 to 533 (DHRKIGKELE…LIEHHSGKFP (292 aa)) form a catalytic region. Positions 333, 384, and 510 each coordinate Zn(2+).

The protein belongs to the class-II aminoacyl-tRNA synthetase family. In terms of assembly, homodimer. Requires Zn(2+) as cofactor.

It localises to the cytoplasm. The catalysed reaction is tRNA(Thr) + L-threonine + ATP = L-threonyl-tRNA(Thr) + AMP + diphosphate + H(+). Catalyzes the attachment of threonine to tRNA(Thr) in a two-step reaction: L-threonine is first activated by ATP to form Thr-AMP and then transferred to the acceptor end of tRNA(Thr). Also edits incorrectly charged L-seryl-tRNA(Thr). In Ehrlichia canis (strain Jake), this protein is Threonine--tRNA ligase.